We begin with the raw amino-acid sequence, 1790 residues long: Vitellogenin (1790 aa).

The signal sequence occupies residues Met-1–Ser-19. Positions Trp-23–Met-799 constitute a Vitellogenin domain. N-linked (GlcNAc...) asparagine glycans are attached at residues Asn-219 and Asn-297. Acidic residues predominate over residues Leu-342–Glu-353. The disordered stretch occupies residues Leu-342 to Pro-400. Positions Glu-378–Gln-389 are enriched in low complexity. N-linked (GlcNAc...) asparagine glycosylation is found at Asn-554, Asn-573, Asn-893, Asn-1345, Asn-1416, Asn-1430, Asn-1480, Asn-1699, and Asn-1735. Positions Pro-1466–Trp-1675 constitute a VWFD domain. Cys-1468 and Cys-1638 are oxidised to a cystine.

The protein localises to the secreted. Its function is as follows. Precursor of the egg-yolk proteins that are sources of nutrients during embryonic development. This chain is Vitellogenin (VTG), found in Anthonomus grandis (Mexican cotton boll weevil).